We begin with the raw amino-acid sequence, 327 residues long: GTP 3',8-cyclase (327 aa).

The 213-residue stretch at 21-233 (SYGRRIRKLR…AKIQQKYSLK (213 aa)) folds into the Radical SAM core domain. Arg30 contacts GTP. Cys37 and Cys41 together coordinate [4Fe-4S] cluster. Tyr43 contacts S-adenosyl-L-methionine. Position 44 (Cys44) interacts with [4Fe-4S] cluster. Arg79 serves as a coordination point for GTP. Gly83 is a binding site for S-adenosyl-L-methionine. Thr109 serves as a coordination point for GTP. An S-adenosyl-L-methionine-binding site is contributed by Ser133. Position 169 (Lys169) interacts with GTP. Met203 provides a ligand contact to S-adenosyl-L-methionine. [4Fe-4S] cluster is bound by residues Cys265 and Cys268. 270 to 272 (RWR) serves as a coordination point for GTP. Cys282 lines the [4Fe-4S] cluster pocket.

Belongs to the radical SAM superfamily. MoaA family. Monomer and homodimer. Requires [4Fe-4S] cluster as cofactor.

The catalysed reaction is GTP + AH2 + S-adenosyl-L-methionine = (8S)-3',8-cyclo-7,8-dihydroguanosine 5'-triphosphate + 5'-deoxyadenosine + L-methionine + A + H(+). The protein operates within cofactor biosynthesis; molybdopterin biosynthesis. Its function is as follows. Catalyzes the cyclization of GTP to (8S)-3',8-cyclo-7,8-dihydroguanosine 5'-triphosphate. The protein is GTP 3',8-cyclase of Synechocystis sp. (strain ATCC 27184 / PCC 6803 / Kazusa).